Here is a 228-residue protein sequence, read N- to C-terminus: Derlin-3 (228 aa).

Over 1–22 the chain is Cytoplasmic; sequence MAGQRLAAGFLQVPAVTRAYTA. The helical transmembrane segment at 23–43 threads the bilayer; that stretch reads ACVLTTAAVQLELLSPFQLYF. The Lumenal segment spans residues 44–57; sequence NPHLVFRKFQVWRL. The chain crosses the membrane as a helical span at residues 58 to 78; the sequence is ITTFLFFGPLGFGFFFNMLFV. The Cytoplasmic segment spans residues 79-98; sequence FRYCRMLEEGSFRGRKADFV. A helical membrane pass occupies residues 99–119; sequence FMFLFGGVLMTLLGFLGSLFF. The Lumenal segment spans residues 120–168; it reads LGQALMAMLVYVWSRRSPHVRVNFFGLLNFQAPFLPWALMGFSLLLGNS. Residues 169-189 traverse the membrane as a helical segment; the sequence is VVTDLLGILVGHIYYFLEDVF. Residues 190 to 228 lie on the Cytoplasmic side of the membrane; it reads PNQPGGKRLLLTPSVLKLLLDDPQEDPDYLPLPEEQPEL.

It belongs to the derlin family. In terms of assembly, forms homo- and heterooligomers with DERL2 and, to a lesser extent, with DERL1. Interacts with VCP and EDEM1. Interacts with SELENOK and SELENOS. Interacts with the signal recognition particle/SRP and the SRP receptor; in the process of endoplasmic reticulum stress-induced pre-emptive quality control. In terms of tissue distribution, highly expressed in spleen, lung, liver, spleen and testis. Expressed at intermediate level in kidney. Weakly or not expressed in brain, heart and skeletal muscle.

The protein localises to the endoplasmic reticulum membrane. Functionally, functional component of endoplasmic reticulum-associated degradation (ERAD) for misfolded lumenal glycoproteins, but not that of misfolded nonglycoproteins. May act by forming a channel that allows the retrotranslocation of misfolded glycoproteins into the cytosol where they are ubiquitinated and degraded by the proteasome. May mediate the interaction between VCP and the misfolded glycoproteins. May be involved in endoplasmic reticulum stress-induced pre-emptive quality control, a mechanism that selectively attenuates the translocation of newly synthesized proteins into the endoplasmic reticulum and reroutes them to the cytosol for proteasomal degradation. This chain is Derlin-3, found in Mus musculus (Mouse).